The chain runs to 145 residues: Putative pre-16S rRNA nuclease (145 aa).

This sequence belongs to the YqgF nuclease family.

Its subcellular location is the cytoplasm. Functionally, could be a nuclease involved in processing of the 5'-end of pre-16S rRNA. The polypeptide is Putative pre-16S rRNA nuclease (Pseudomonas fluorescens).